Consider the following 76-residue polypeptide: Spore germination protein-like protein YdzR (76 aa).

The protein belongs to the GerPA/GerPF family.

The polypeptide is Spore germination protein-like protein YdzR (ydzR) (Bacillus subtilis (strain 168)).